A 682-amino-acid chain; its full sequence is Pneumocandin biosynthesis cluster protein B (682 aa).

The segment covering 63–73 (SSLSSTEVTSS) has biased composition (low complexity). Disordered stretches follow at residues 63–86 (SSLS…DAPE), 107–129 (QNTP…DTNQ), and 251–358 (SEST…SPAN). Composition is skewed to polar residues over residues 257 to 279 (NTGS…SHSS) and 310 to 320 (PRQTTEATPCD). Over residues 335–349 (PERRSMKMVRKEARD) the composition is skewed to basic and acidic residues.

Its function is as follows. Part of the gene cluster that mediates the biosynthesis of pneumocandins, lipohexapeptides of the echinocandin family that prevent fungal cell wall formation by non-competitive inhibition of beta-1,3-glucan synthase. The 10,12-dimethylmyristoyl side chain is synthesized by the reducing polyketide synthase gloL/GLPKS4. The thioesterase gloN/GLHYD exclusively interacts with gloL/GLPKS4 to maintain turnover of the polyketide side chain. The 10R,12S-dimethylmyristic acid is then transferred to the first thiolation domain of the nonribosomal peptide synthetase gloA/GLNRPS4 by the acyl-AMP ligase gloD/GLligase, followed by its acylation to L-ornithine to trigger elongation of the cyclic hexapeptide. L-ornithine, 4R-hydroxyl-L-proline (generated from L-proline by the dioxygenase gloF/GLOXY2), 3S-hydroxyl-L-homotyrosine (generated by gloG/GLHtyB, gloH/GLHtyA, gloI/GLHtyC, gloJ/GLHtyD and hydroxylated at C-3 by the dioxygenase gloM/GLOXY1), 3R-hydroxyl-L-glutamine (generated from L-glutamine probably by the dioxygenase gloE/GLOXY3) and 3S-hydroxyl-L-proline (generated from L-proline by the dioxygenase gloF/GLOXY2 to yield pneumocandin B0), or 3S-hydroxyl-4S-methyl-L-proline (generated from L-leucine by the dioxygenase gloC/GLOXY4 to yield pneumocandin A0) are sequentially added to the growing chain. The last C domain of gloA/GLNRPS4 is proposed to be responsible for cyclization by condensation to form the peptide bond between L-ornithine and 3S-hydroxyl-4S-methyl-L-proline (for pneumocandin A0) or 3S-hydroxyl-L-proline (for pneumocandin B0). Finally, the subsequent C-4 hydroxylation of 3S-hydroxyl-L-homotyrosine and L-ornithine dihydroxylation at C-4 and C-5 are performed by the cytochrome P450 monooxygenases gloP/GLP450-1 and gloO/GLP450-2, respectively. This Glarea lozoyensis (strain ATCC 20868 / MF5171) protein is Pneumocandin biosynthesis cluster protein B.